Reading from the N-terminus, the 636-residue chain is 1-deoxy-D-xylulose-5-phosphate synthase 2 (636 aa).

Thiamine diphosphate-binding positions include histidine 78 and alanine 119–serine 121. A Mg(2+)-binding site is contributed by aspartate 150. Thiamine diphosphate contacts are provided by residues glycine 151–serine 152, asparagine 179, tyrosine 288, and glutamate 370. Asparagine 179 lines the Mg(2+) pocket.

This sequence belongs to the transketolase family. DXPS subfamily. In terms of assembly, homodimer. Mg(2+) is required as a cofactor. It depends on thiamine diphosphate as a cofactor.

It carries out the reaction D-glyceraldehyde 3-phosphate + pyruvate + H(+) = 1-deoxy-D-xylulose 5-phosphate + CO2. It functions in the pathway metabolic intermediate biosynthesis; 1-deoxy-D-xylulose 5-phosphate biosynthesis; 1-deoxy-D-xylulose 5-phosphate from D-glyceraldehyde 3-phosphate and pyruvate: step 1/1. Catalyzes the acyloin condensation reaction between C atoms 2 and 3 of pyruvate and glyceraldehyde 3-phosphate to yield 1-deoxy-D-xylulose-5-phosphate (DXP). The chain is 1-deoxy-D-xylulose-5-phosphate synthase 2 from Jannaschia sp. (strain CCS1).